Reading from the N-terminus, the 227-residue chain is Cytochrome c oxidase subunit 2 (227 aa).

Topologically, residues 1-14 are mitochondrial intermembrane; it reads MAYPFQLGFQDATS. A helical transmembrane segment spans residues 15 to 45; it reads PIMEELLHFHDHTLMIVFLISSLVLYVISAM. The Mitochondrial matrix portion of the chain corresponds to 46–59; it reads LTTNLTHTSTMDAQ. The chain crosses the membrane as a helical span at residues 60 to 87; it reads EVETIWTILPAIILITIALPSLRILYMM. The Mitochondrial intermembrane portion of the chain corresponds to 88–227; that stretch reads DEINNPAMTI…YFEKWSVSML (140 aa). H161, C196, E198, C200, H204, and M207 together coordinate Cu cation. E198 is a binding site for Mg(2+). Position 218 is a phosphotyrosine (Y218).

It belongs to the cytochrome c oxidase subunit 2 family. Component of the cytochrome c oxidase (complex IV, CIV), a multisubunit enzyme composed of 14 subunits. The complex is composed of a catalytic core of 3 subunits MT-CO1, MT-CO2 and MT-CO3, encoded in the mitochondrial DNA, and 11 supernumerary subunits COX4I, COX5A, COX5B, COX6A, COX6B, COX6C, COX7A, COX7B, COX7C, COX8 and NDUFA4, which are encoded in the nuclear genome. The complex exists as a monomer or a dimer and forms supercomplexes (SCs) in the inner mitochondrial membrane with NADH-ubiquinone oxidoreductase (complex I, CI) and ubiquinol-cytochrome c oxidoreductase (cytochrome b-c1 complex, complex III, CIII), resulting in different assemblies (supercomplex SCI(1)III(2)IV(1) and megacomplex MCI(2)III(2)IV(2)). Found in a complex with TMEM177, COA6, COX18, COX20, SCO1 and SCO2. Interacts with TMEM177 in a COX20-dependent manner. Interacts with COX20. Interacts with COX16. Cu cation serves as cofactor.

The protein resides in the mitochondrion inner membrane. The enzyme catalyses 4 Fe(II)-[cytochrome c] + O2 + 8 H(+)(in) = 4 Fe(III)-[cytochrome c] + 2 H2O + 4 H(+)(out). Component of the cytochrome c oxidase, the last enzyme in the mitochondrial electron transport chain which drives oxidative phosphorylation. The respiratory chain contains 3 multisubunit complexes succinate dehydrogenase (complex II, CII), ubiquinol-cytochrome c oxidoreductase (cytochrome b-c1 complex, complex III, CIII) and cytochrome c oxidase (complex IV, CIV), that cooperate to transfer electrons derived from NADH and succinate to molecular oxygen, creating an electrochemical gradient over the inner membrane that drives transmembrane transport and the ATP synthase. Cytochrome c oxidase is the component of the respiratory chain that catalyzes the reduction of oxygen to water. Electrons originating from reduced cytochrome c in the intermembrane space (IMS) are transferred via the dinuclear copper A center (CU(A)) of subunit 2 and heme A of subunit 1 to the active site in subunit 1, a binuclear center (BNC) formed by heme A3 and copper B (CU(B)). The BNC reduces molecular oxygen to 2 water molecules using 4 electrons from cytochrome c in the IMS and 4 protons from the mitochondrial matrix. This chain is Cytochrome c oxidase subunit 2 (MT-CO2), found in Macrotus californicus (Californian leaf-nosed bat).